The chain runs to 242 residues: Probable transcriptional regulatory protein STH1004 (242 aa).

Belongs to the TACO1 family.

It is found in the cytoplasm. In Symbiobacterium thermophilum (strain DSM 24528 / JCM 14929 / IAM 14863 / T), this protein is Probable transcriptional regulatory protein STH1004.